The sequence spans 83 residues: Small ribosomal subunit protein bS16 (83 aa).

The protein belongs to the bacterial ribosomal protein bS16 family.

In Pseudomonas aeruginosa (strain LESB58), this protein is Small ribosomal subunit protein bS16.